A 400-amino-acid chain; its full sequence is GTPase Obg (400 aa).

The Obg domain maps to 1 to 159 (MRFVDEAVIT…REIRLELKVL (159 aa)). The region spanning 160–333 (ADVGLLGMPN…VVYYLMDQIE (174 aa)) is the OBG-type G domain. GTP-binding positions include 166–173 (GMPNAGKS), 191–195 (FTTMV), 213–216 (DIPG), 283–286 (NKLD), and 314–316 (SGL). Residues S173 and T193 each contribute to the Mg(2+) site.

The protein belongs to the TRAFAC class OBG-HflX-like GTPase superfamily. OBG GTPase family. As to quaternary structure, monomer. It depends on Mg(2+) as a cofactor.

The protein localises to the cytoplasm. Its function is as follows. An essential GTPase which binds GTP, GDP and possibly (p)ppGpp with moderate affinity, with high nucleotide exchange rates and a fairly low GTP hydrolysis rate. Plays a role in control of the cell cycle, stress response, ribosome biogenesis and in those bacteria that undergo differentiation, in morphogenesis control. The polypeptide is GTPase Obg (Acinetobacter baylyi (strain ATCC 33305 / BD413 / ADP1)).